Here is a 67-residue protein sequence, read N- to C-terminus: DNA-directed RNA polymerase subunit omega (67 aa).

Belongs to the RNA polymerase subunit omega family. The RNAP catalytic core consists of 2 alpha, 1 beta, 1 beta' and 1 omega subunit. When a sigma factor is associated with the core the holoenzyme is formed, which can initiate transcription.

The catalysed reaction is RNA(n) + a ribonucleoside 5'-triphosphate = RNA(n+1) + diphosphate. Promotes RNA polymerase assembly. Latches the N- and C-terminal regions of the beta' subunit thereby facilitating its interaction with the beta and alpha subunits. The protein is DNA-directed RNA polymerase subunit omega of Ralstonia nicotianae (strain ATCC BAA-1114 / GMI1000) (Ralstonia solanacearum).